The chain runs to 249 residues: 4-hydroxy-tetrahydrodipicolinate reductase (249 aa).

Residues D32, 74 to 76 (GTT), and 99 to 102 (SANF) contribute to the NAD(+) site. H134 (proton donor/acceptor) is an active-site residue. A (S)-2,3,4,5-tetrahydrodipicolinate-binding site is contributed by H135. K138 serves as the catalytic Proton donor. 144–145 (GT) serves as a coordination point for (S)-2,3,4,5-tetrahydrodipicolinate.

This sequence belongs to the DapB family.

The protein localises to the cytoplasm. It catalyses the reaction (S)-2,3,4,5-tetrahydrodipicolinate + NAD(+) + H2O = (2S,4S)-4-hydroxy-2,3,4,5-tetrahydrodipicolinate + NADH + H(+). The catalysed reaction is (S)-2,3,4,5-tetrahydrodipicolinate + NADP(+) + H2O = (2S,4S)-4-hydroxy-2,3,4,5-tetrahydrodipicolinate + NADPH + H(+). Its pathway is amino-acid biosynthesis; L-lysine biosynthesis via DAP pathway; (S)-tetrahydrodipicolinate from L-aspartate: step 4/4. Functionally, catalyzes the conversion of 4-hydroxy-tetrahydrodipicolinate (HTPA) to tetrahydrodipicolinate. The sequence is that of 4-hydroxy-tetrahydrodipicolinate reductase from Chlorobaculum parvum (strain DSM 263 / NCIMB 8327) (Chlorobium vibrioforme subsp. thiosulfatophilum).